A 439-amino-acid polypeptide reads, in one-letter code: Beta-1,3-galactosyl-O-glycosyl-glycoprotein beta-1,6-N-acetylglucosaminyltransferase (439 aa).

Residues 1–11 lie on the Cytoplasmic side of the membrane; that stretch reads MVGWKKKKLCR. The helical; Signal-anchor for type II membrane protein transmembrane segment at 12–29 threads the bilayer; the sequence is GHHLWVLGCYMLLAVVSL. Over 30–439 the chain is Lumenal; the sequence is RLSLRFKCDV…RHKAIYGTEL (410 aa). 2 N-linked (GlcNAc...) asparagine; by host glycosylation sites follow: Asn-71 and Asn-107. Disulfide bonds link Cys-72–Cys-229, Cys-163–Cys-383, Cys-184–Cys-211, and Cys-392–Cys-424.

Belongs to the glycosyltransferase 14 family.

The protein resides in the host Golgi apparatus membrane. The enzyme catalyses a 3-O-[beta-D-galactosyl-(1-&gt;3)-N-acetyl-alpha-D-galactosaminyl]-L-seryl-[protein] + UDP-N-acetyl-alpha-D-glucosamine = 3-O-{beta-D-galactosyl-(1-&gt;3)-[N-acetyl-beta-D-glucosaminyl-(1-&gt;6)]-N-acetyl-alpha-D-galactosaminyl}-L-seryl-[protein] + UDP + H(+). It catalyses the reaction a 3-O-[beta-D-galactosyl-(1-&gt;3)-N-acetyl-alpha-D-galactosaminyl]-L-threonyl-[protein] + UDP-N-acetyl-alpha-D-glucosamine = a 3-O-{beta-D-galactosyl-(1-&gt;3)-[N-acetyl-beta-D-glucosaminyl-(1-&gt;6)]-N-acetyl-alpha-D-galactosaminyl}-L-threonyl-[protein] + UDP + H(+). The catalysed reaction is a beta-D-Gal-(1-&gt;4)-beta-D-GlcNAc-(1-&gt;3)-beta-D-Gal-(1-&gt;4)-beta-D-GlcNAc derivative + UDP-N-acetyl-alpha-D-glucosamine = a beta-D-Gal-(1-&gt;4)-beta-D-GlcNAc-(1-&gt;3)-[beta-D-GlcNAc-(1-&gt;6)]-beta-D-Gal-(1-&gt;4)-N-acetyl-beta-D-glucosaminyl derivative + UDP + H(+). It carries out the reaction 3-O-[N-acetyl-beta-D-glucosaminyl-(1-&gt;3)-N-acetyl-alpha-D-galactosaminyl]-L-seryl-[protein] + UDP-N-acetyl-alpha-D-glucosamine = 3-O-[N-acetyl-beta-D-glucosaminyl-(1-&gt;3)-[N-acetyl-beta-D-glucosaminyl-(1-&gt;6)]-N-acetyl-alpha-D-galactosaminyl]-L-seryl-[protein] + UDP + H(+). The enzyme catalyses a 3-O-[N-acetyl-beta-D-glucosaminyl-(1-&gt;3)-N-acetyl-alpha-D-galactosaminyl]-L-threonyl-[protein] + UDP-N-acetyl-alpha-D-glucosamine = 3-O-[N-acetyl-beta-D-glucosaminyl-(1-&gt;3)-[N-acetyl-beta-D-glucosaminyl-(1-&gt;6)]-N-acetyl-alpha-D-galactosaminyl]-L-threonyl-[protein] + UDP + H(+). Its pathway is protein modification; protein glycosylation. In terms of biological role, non-essential glycosyltransferase that can synthesize all known mucin beta 6 N-acetylglucosaminides. Mediates core 2 and core 4 O-glycan branching, 2 important steps in mucin-type biosynthesis. Has also I-branching enzyme activity by converting linear into branched poly-N-acetyllactosaminoglycans. Contributes to the post-translational modifications of structural proteins. The sequence is that of Beta-1,3-galactosyl-O-glycosyl-glycoprotein beta-1,6-N-acetylglucosaminyltransferase (Bo17) from Bovine herpesvirus 4 (BoHV-4).